An 865-amino-acid chain; its full sequence is Alanine--tRNA ligase (865 aa).

Positions 554, 558, 656, and 660 each coordinate Zn(2+).

It belongs to the class-II aminoacyl-tRNA synthetase family. Zn(2+) serves as cofactor.

The protein resides in the cytoplasm. The enzyme catalyses tRNA(Ala) + L-alanine + ATP = L-alanyl-tRNA(Ala) + AMP + diphosphate. Functionally, catalyzes the attachment of alanine to tRNA(Ala) in a two-step reaction: alanine is first activated by ATP to form Ala-AMP and then transferred to the acceptor end of tRNA(Ala). Also edits incorrectly charged Ser-tRNA(Ala) and Gly-tRNA(Ala) via its editing domain. The protein is Alanine--tRNA ligase of Francisella tularensis subsp. holarctica (strain LVS).